A 183-amino-acid polypeptide reads, in one-letter code: Microfibrillar-associated protein 2 (183 aa).

The segment at residues Met-1–Ala-16 is a signal peptide (or 18). Gln-17 carries the post-translational modification Pyrrolidone carboxylic acid. Residues Tyr-46, Tyr-47, and Tyr-49 each carry the sulfotyrosine modification. The interval Val-52–Pro-92 is disordered. Residues Glu-59–Glu-70 are compositionally biased toward low complexity. Residues Cys-153–Cys-183 enclose the ShKT domain. Cystine bridges form between Cys-153-Cys-183, Cys-160-Cys-176, and Cys-169-Cys-180.

Belongs to the MFAP family. Forms a ternary complex with BGN and ELN. Interacts with FBN1 (via N-terminal domain) and FBN2. In terms of processing, forms intermolecular disulfide bonds either with other MAGP-1 molecules or with other components of the microfibrils. May form transglutaminase cross-links. O-glycosylated.

It is found in the secreted. Its subcellular location is the extracellular space. It localises to the extracellular matrix. In terms of biological role, component of the elastin-associated microfibrils. This chain is Microfibrillar-associated protein 2 (Mfap2), found in Mus musculus (Mouse).